We begin with the raw amino-acid sequence, 156 residues long: Small ribosomal subunit protein uS7 (156 aa).

This sequence belongs to the universal ribosomal protein uS7 family. Part of the 30S ribosomal subunit. Contacts proteins S9 and S11.

One of the primary rRNA binding proteins, it binds directly to 16S rRNA where it nucleates assembly of the head domain of the 30S subunit. Is located at the subunit interface close to the decoding center, probably blocks exit of the E-site tRNA. The polypeptide is Small ribosomal subunit protein uS7 (Syntrophotalea carbinolica (strain DSM 2380 / NBRC 103641 / GraBd1) (Pelobacter carbinolicus)).